Here is a 157-residue protein sequence, read N- to C-terminus: 2-C-methyl-D-erythritol 2,4-cyclodiphosphate synthase (157 aa).

Positions 8 and 10 each coordinate a divalent metal cation. 4-CDP-2-C-methyl-D-erythritol 2-phosphate-binding positions include 8–10 (DVH) and 34–35 (HS). Histidine 42 serves as a coordination point for a divalent metal cation. 4-CDP-2-C-methyl-D-erythritol 2-phosphate-binding positions include 56 to 58 (DIG), 61 to 65 (FPDTD), 100 to 106 (AQAPKMA), 132 to 135 (TTTE), phenylalanine 139, and arginine 142.

It belongs to the IspF family. As to quaternary structure, homotrimer. Requires a divalent metal cation as cofactor.

The catalysed reaction is 4-CDP-2-C-methyl-D-erythritol 2-phosphate = 2-C-methyl-D-erythritol 2,4-cyclic diphosphate + CMP. The protein operates within isoprenoid biosynthesis; isopentenyl diphosphate biosynthesis via DXP pathway; isopentenyl diphosphate from 1-deoxy-D-xylulose 5-phosphate: step 4/6. Functionally, involved in the biosynthesis of isopentenyl diphosphate (IPP) and dimethylallyl diphosphate (DMAPP), two major building blocks of isoprenoid compounds. Catalyzes the conversion of 4-diphosphocytidyl-2-C-methyl-D-erythritol 2-phosphate (CDP-ME2P) to 2-C-methyl-D-erythritol 2,4-cyclodiphosphate (ME-CPP) with a corresponding release of cytidine 5-monophosphate (CMP). The polypeptide is 2-C-methyl-D-erythritol 2,4-cyclodiphosphate synthase (Pseudomonas syringae pv. tomato (strain ATCC BAA-871 / DC3000)).